Reading from the N-terminus, the 620-residue chain is Probable potassium transport system protein Kup (620 aa).

The next 12 helical transmembrane spans lie at L11–F31, I51–V71, I100–P120, L138–A158, F167–I187, A202–L222, W246–L266, L288–F308, G334–L354, A364–V384, V396–T416, and L418–I438.

Belongs to the HAK/KUP transporter (TC 2.A.72) family.

It is found in the cell inner membrane. The catalysed reaction is K(+)(in) + H(+)(in) = K(+)(out) + H(+)(out). Its function is as follows. Transport of potassium into the cell. Likely operates as a K(+):H(+) symporter. This is Probable potassium transport system protein Kup from Vibrio cholerae serotype O1 (strain ATCC 39315 / El Tor Inaba N16961).